Consider the following 259-residue polypeptide: Glutathione S-transferase domain-containing protein DDB_G0274705 (259 aa).

Residues 7-96 (KIDYIFYTNN…YLAQKFNTFL (90 aa)) enclose the GST N-terminal domain. Positions 102–232 (NPLENSEVIT…GFKNFNPSLL (131 aa)) constitute a GST C-terminal domain.

Belongs to the GST superfamily.

This Dictyostelium discoideum (Social amoeba) protein is Glutathione S-transferase domain-containing protein DDB_G0274705.